Consider the following 587-residue polypeptide: MSTSVAGVLAVALLVAALWVTYRPFGDYMYRVFAAKRHLRVERAIYRLTGVNPDTGQRWPVYARSVLAFSLVSVLLLYLLQRVQEHLPLNLGFGAVGPALAWNTAVSFMTNTNWQAYSGESTMGHTVQMTGLAVQNFVSAAVGIAVAIAVVRGFARRRAPVAVGGPGGPNGPGGPGGPNGPGAGSRDDVIGTGDELGNFWVDLTRTVIRILLPVCVIAAIVLVAGGAIQNLHGNRVVSTLAGGHQTITGGPVASQEAIKEFGTNGGGFYNVNSAHPFENPTSWTNLVEIFLLLAIAFSLPRTFGRMVGDRRQGLAIVAVMAVLALGSFAVNAAFQTAHHGTVPVAVGAATEGTDTRFGVPNSALFASATTLTSTGAVNSFHDSYTSLGGATLLFNMMLGEVAPGGTGSGLYGMLVLAVVTVFVAGLMIGRTPEYLGKKIGSREIKFASLYFLATPAIALLGTGVAMGLPGERASMLNSGAHGLSEVLYAFTSAANNNGSAFGGISVNTTWYNTALGLAMLFGRLLPMLLVLGMAGSFARQHPVPATAGTLPTHRPQFAGMLGAIALIIVALTFFPALALGPLAEGIH.

4 helical membrane passes run Met-1 to Thr-21, Pro-60 to Leu-80, Leu-89 to Met-109, and Gly-131 to Val-151. Residues Ala-162–Asp-188 are disordered. Gly residues predominate over residues Gly-164–Ala-183. Helical transmembrane passes span Ile-208–Ile-228, Pro-280–Pro-300, Leu-314–Phe-334, Gly-409–Gly-429, Leu-449–Pro-469, Ala-514–Ala-534, and Phe-557–Leu-577.

It belongs to the KdpA family. As to quaternary structure, the system is composed of three essential subunits: KdpA, KdpB and KdpC.

The protein localises to the cell membrane. Its function is as follows. Part of the high-affinity ATP-driven potassium transport (or Kdp) system, which catalyzes the hydrolysis of ATP coupled with the electrogenic transport of potassium into the cytoplasm. This subunit binds the extracellular potassium ions and delivers the ions to the membrane domain of KdpB through an intramembrane tunnel. The chain is Potassium-transporting ATPase potassium-binding subunit from Frankia alni (strain DSM 45986 / CECT 9034 / ACN14a).